Consider the following 376-residue polypeptide: Serpin B6 (376 aa).

At methionine 1 the chain carries N-acetylmethionine. The residue at position 151 (serine 151) is a Phosphoserine. Lysine 195 bears the N6-acetyllysine mark.

It belongs to the serpin family. Ov-serpin subfamily. Forms a complex with the monomeric form of beta-tryptase.

It localises to the cytoplasm. Inhibitor of cathepsin G, kallikrein-8 and thrombin. May play an important role in the inner ear in the protection against leakage of lysosomal content during stress. May be involved in the regulation of serine proteinases present in the brain or extravasated from the blood. The sequence is that of Serpin B6 (SERPINB6) from Pongo abelii (Sumatran orangutan).